A 170-amino-acid polypeptide reads, in one-letter code: Cathelicidin antimicrobial peptide (170 aa).

The signal sequence occupies residues 1–30 (MKTQRDSPSLGRWSLVLLLLGLVMPLAIVA). The propeptide at 31–131 (QVLSYQEAVL…DISCDKDNRR (101 aa)) is cathelin-like domain (CLD). 2 disulfides stabilise this stretch: C86–C97 and C108–C125. The tract at residues 150–162 (LKKVGQKIKDFLG) is active core.

Belongs to the cathelicidin family. In terms of assembly, monomer, homodimer or homotrimer (in vitro). Oligomerizes as tetra- or hexamer in solution (in vitro). Proteolytically cleaved by proteinase PRTN3 into antibacterial peptide LL-37. Proteolytically cleaved by cathepsin CTSG and neutrophil elastase ELANE. Post-translationally, resistant to proteolytic degradation in solution, and when bound to both zwitterionic (mimicking mammalian membranes) and negatively charged membranes (mimicking bacterial membranes). In terms of processing, after secretion onto the skin surface, the CAMP gene product is processed by a serine protease-dependent mechanism into multiple novel antimicrobial peptides distinct from and shorter than cathelicidin LL-37. These peptides show enhanced antimicrobial action, acquiring the ability to kill skin pathogens such as S.aureus, E.coli and C.albicans. These peptides have lost the ability to stimulate CXCL8/IL8 release from keratinocytes. The peptides act synergistically, killing bacteria at lower concentrations when present together, and maintain activity at increased salt condition.

It is found in the secreted. The protein resides in the vesicle. Antimicrobial protein that is an integral component of the innate immune system. Binds to bacterial lipopolysaccharides (LPS). Acts via neutrophil N-formyl peptide receptors to enhance the release of CXCL2. Postsecretory processing generates multiple cathelicidin antimicrobial peptides with various lengths which act as a topical antimicrobial defense in sweat on skin. The unprocessed precursor form, cathelicidin antimicrobial peptide, inhibits the growth of Gram-negative E.coli and E.aerogenes with efficiencies comparable to that of the mature peptide LL-37 (in vitro). Functionally, antimicrobial peptide that is an integral component of the innate immune system. Binds to bacterial lipopolysaccharides (LPS). Causes membrane permeabilization by forming transmembrane pores (in vitro). Causes lysis of E.coli. Exhibits antimicrobial activity against Gram-negative bacteria such as P.aeruginosa, S.typhimurium, E.aerogenes, E.coli and P.syringae, Gram-positive bacteria such as L.monocytogenes, S.epidermidis, S.pyogenes and S.aureus, as well as vancomycin-resistant enterococci (in vitro). Exhibits antimicrobial activity against methicillin-resistant S.aureus, P.mirabilis, and C.albicans in low-salt media, but not in media containing 100 mM NaCl (in vitro). Forms chiral supramolecular assemblies with quinolone signal (PQS) molecules of P.aeruginosa, which may lead to interference of bacterial quorum signaling and perturbance of bacterial biofilm formation. May form supramolecular fiber-like assemblies on bacterial membranes. Induces cytokine and chemokine producation as well as TNF/TNFA and CSF2/GMCSF production in normal human keratinocytes. Exhibits hemolytic activity against red blood cells. Its function is as follows. Exhibits antimicrobial activity against E.coli and B.megaterium (in vitro). This chain is Cathelicidin antimicrobial peptide, found in Macaca fascicularis (Crab-eating macaque).